The chain runs to 211 residues: Large ribosomal subunit protein uL4 (211 aa).

The tract at residues 40–87 (QQAHTRQGTASTLTRSEVRGGGRKPYKQKGTGRARQGSIRTPLRPGGG) is disordered. Residues 41-54 (QAHTRQGTASTLTR) show a composition bias toward polar residues. Residues 60–71 (GGRKPYKQKGTG) show a composition bias toward basic residues.

The protein belongs to the universal ribosomal protein uL4 family. Part of the 50S ribosomal subunit.

Its function is as follows. One of the primary rRNA binding proteins, this protein initially binds near the 5'-end of the 23S rRNA. It is important during the early stages of 50S assembly. It makes multiple contacts with different domains of the 23S rRNA in the assembled 50S subunit and ribosome. Forms part of the polypeptide exit tunnel. This Synechococcus sp. (strain WH7803) protein is Large ribosomal subunit protein uL4.